The chain runs to 658 residues: Endoglin (658 aa).

The signal sequence occupies residues 1 to 25; that stretch reads MDRGTLPLAVALLLASCSLSPTSLA. The OR1, N-terminal part stretch occupies residues 26 to 46; it reads ETVHCDLQPVGPERGEVTYTT. A required for interaction with GDF2 region spans residues 26–337; the sequence is ETVHCDLQPV…SSCGGRLQTS (312 aa). The Extracellular portion of the chain corresponds to 26–586; it reads ETVHCDLQPV…PDLSGCTSKG (561 aa). 7 cysteine pairs are disulfide-bonded: Cys-30–Cys-207, Cys-53–Cys-182, Cys-242–Cys-330, Cys-350–Cys-382, Cys-363–Cys-442, Cys-394–Cys-412, and Cys-493–Cys-549. An OR2 region spans residues 47-199; the sequence is SQVSKGCVAQ…MGRTLEWRPR (153 aa). N-linked (GlcNAc...) asparagine glycosylation is found at Asn-88, Asn-102, Asn-121, and Asn-134. An OR1, C-terminal part region spans residues 200-330; that stretch reads TPALVRGCHL…SIVSLHASSC (131 aa). An essential for interaction with GDF2 region spans residues 270–282; the sequence is QIWTTGEYSFKIF. An N-linked (GlcNAc...) asparagine glycan is attached at Asn-307. The region spanning 363–533 is the ZP domain; it reads CADDAMTLVL…PEGDPRFSFL (171 aa). A Cell attachment site motif is present at residues 399 to 401; the sequence is RGD. Residues 587 to 611 form a helical membrane-spanning segment; that stretch reads LVLPAVLGITFGAFLIGALLTAALW. Topologically, residues 612-658 are cytoplasmic; sequence YIYSHTRSPSKREPVVAVAAPASSESSSTNHSIGSTQSTPCSTSSMA. The segment covering 626-639 has biased composition (low complexity); that stretch reads VVAVAAPASSESSS. Residues 626-658 form a disordered region; sequence VVAVAAPASSESSSTNHSIGSTQSTPCSTSSMA. The span at 640-658 shows a compositional bias: polar residues; sequence TNHSIGSTQSTPCSTSSMA. A phosphoserine; by TGFBR1 mark is found at Ser-646 and Ser-649.

As to quaternary structure, homodimer; disulfide-linked. Forms a heteromeric complex with the signaling receptors for transforming growth factor-beta: TGFBR1 and/or TGFBR2. It is able to bind TGFB1 and TGFB2 with high affinity, but not TGFB3. Interacts with GDF2, forming a heterotetramer with a 2:2 stoichiometry. Interacts with ACVRL1. Can form a heteromeric complex with GDF2 and ACVRL1. Interacts with BMP10. Interacts with DYNLT4. Interacts with ARRB2. Detected on umbilical veil endothelial cells. Detected in placenta (at protein level). Detected on endothelial cells.

It is found in the cell membrane. Functionally, vascular endothelium glycoprotein that plays an important role in the regulation of angiogenesis. Required for normal structure and integrity of adult vasculature. Regulates the migration of vascular endothelial cells. Required for normal extraembryonic angiogenesis and for embryonic heart development. May regulate endothelial cell shape changes in response to blood flow, which drive vascular remodeling and establishment of normal vascular morphology during angiogenesis. May play a critical role in the binding of endothelial cells to integrins and/or other RGD receptors. Acts as a TGF-beta coreceptor and is involved in the TGF-beta/BMP signaling cascade that ultimately leads to the activation of SMAD transcription factors. Required for GDF2/BMP9 signaling through SMAD1 in endothelial cells and modulates TGFB1 signaling through SMAD3. The protein is Endoglin (ENG) of Homo sapiens (Human).